A 163-amino-acid chain; its full sequence is Photosystem II extrinsic protein V (163 aa).

A signal peptide spans 1–26 (MLKRSSWLAALLGLLTVVSTSTHTYA). Residues C63, C66, H67, and H118 each contribute to the heme c site.

This sequence belongs to the cytochrome c family. PsbV subfamily. As to quaternary structure, PSII is composed of 1 copy each of membrane proteins PsbA, PsbB, PsbC, PsbD, PsbE, PsbF, PsbH, PsbI, PsbJ, PsbK, PsbL, PsbM, PsbT, PsbY, PsbZ, Psb30/Ycf12, at least 3 peripheral proteins of the oxygen-evolving complex and a large number of cofactors. It forms dimeric complexes. The extrinsic subunits in red algae are PsbO (OEC33), PsbQ', cytochrome c-550 and PsbU. Requires heme c as cofactor.

Its subcellular location is the plastid. The protein resides in the chloroplast thylakoid membrane. In terms of biological role, one of the extrinsic, lumenal subunits of photosystem II (PSII). PSII is a light-driven water plastoquinone oxidoreductase, using light energy to abstract electrons from H(2)O, generating a proton gradient subsequently used for ATP formation. The extrinsic proteins stabilize the structure of photosystem II oxygen-evolving complex (OEC), the ion environment of oxygen evolution and protect the OEC against heat-induced inactivation. This Pyropia yezoensis (Susabi-nori) protein is Photosystem II extrinsic protein V.